The primary structure comprises 2784 residues: Cilia- and flagella-associated protein 46 (2784 aa).

A TPR 1 repeat occupies 129–162 (GLEVAAANQPRYQFLVYNASVHHWRVVAPLHRDG). Residues 242–268 (TAAAAKLTELQKDVARLQVHLATLAAA) adopt a coiled-coil conformation. Residues 401-434 (SLAPVVVAAHVKALEQLEDVLTTFTKLADVEGIH) form a TPR 2 repeat. Disordered regions lie at residues 543–562 (SAEP…RSKE) and 581–607 (RDLP…AAAR). Residues 585 to 595 (HPPPPAPTDPP) are compositionally biased toward pro residues. A coiled-coil region spans residues 644 to 665 (AVDREMVLLQAQLAHYEAEAAI). The tract at residues 670-697 (RRRADISPPTRPSPPEVDGEGVRQPPAT) is disordered. One copy of the TPR 3 repeat lies at 708–743 (ASVRSMRGAMSVNEPWLTLNNAVQLYNAALPLMQQH). Disordered regions lie at residues 799-837 (DAGQ…PAYK) and 929-954 (RVNE…KPHG). Residues 802–817 (QELEDDDDEDSLDEDG) show a composition bias toward acidic residues. The stretch at 976–1009 (LELWAKMARAVADAGVWPAALECSAAALAALPGA) is one TPR 4 repeat. Residues 1275-1288 (TGDLDGDGTDDEDD) show a composition bias toward acidic residues. 2 disordered regions span residues 1275-1351 (TGDL…RVPE) and 1640-1673 (AAGG…HGQL). The segment covering 1298–1311 (SGGGSSSGRAGGGF) has biased composition (gly residues). Residues 1646–1658 (GGRESPSPHDDGI) are compositionally biased toward basic and acidic residues. TPR repeat units lie at residues 1712–1745 (HDVW…AADC) and 1854–1886 (MEML…LAAR). Positions 1961 to 1984 (RLAEVQLAAAEERERLAGADREKA) form a coiled coil. Disordered stretches follow at residues 2068–2112 (RPFV…EAAA), 2278–2303 (ATAE…PAAA), 2346–2389 (AAKG…PGAA), and 2441–2465 (LPLP…AGPT). Pro residues predominate over residues 2069-2083 (PFVPPPKPPGAPKRP). Positions 2087–2096 (AEEEEDEEGP) are enriched in acidic residues. Positions 2097 to 2112 (DTAAADAAAEAAEAAA) are enriched in low complexity. The segment covering 2378–2389 (SKQGPKSGPGAA) has biased composition (low complexity). Positions 2450 to 2461 (DGKKEKKDKKEA) are enriched in basic and acidic residues. The stretch at 2613 to 2646 (ATGGPCTGLLFLGVGRFAAHVPPAVLASAPLGGC) is one TPR 7 repeat.

It belongs to the CFAP46 family. In terms of assembly, part of the PDCP1 complex composed of CFAP46, CFAP54, CFAP74 and CFAP221; the PDCP1 complex binds calmodulin.

It localises to the cytoplasm. Its subcellular location is the cytoskeleton. It is found in the cilium axoneme. Its function is as follows. As part of the central apparatus of the cilium axoneme plays a role in cilium movement and thereby cell motility. The polypeptide is Cilia- and flagella-associated protein 46 (Chlamydomonas reinhardtii (Chlamydomonas smithii)).